A 252-amino-acid polypeptide reads, in one-letter code: Carbonic anhydrase (252 aa).

The signal sequence occupies residues 1–26; that stretch reads MPRFPRTLPRLTAVLLLACTAFSAAA. Residues 31–252 enclose the Alpha-carbonic anhydrase domain; that stretch reads THWGYTGHDS…QPLNARVVIE (222 aa). Cys-54 and Cys-207 are disulfide-bonded. The Proton acceptor role is filled by His-92. The Zn(2+) site is built by His-118, His-120, and His-137. 203–204 contributes to the substrate binding site; it reads TT.

It belongs to the alpha-carbonic anhydrase family. As to quaternary structure, homodimer. The cofactor is Zn(2+).

It localises to the periplasm. It carries out the reaction hydrogencarbonate + H(+) = CO2 + H2O. Reversible hydration of carbon dioxide. In Neisseria gonorrhoeae, this protein is Carbonic anhydrase (cah).